A 669-amino-acid polypeptide reads, in one-letter code: DNA ligase (669 aa).

Residues 33–37 (DAEYD), 82–83 (SL), and glutamate 114 each bind NAD(+). The active-site N6-AMP-lysine intermediate is lysine 116. Residues arginine 137, glutamate 174, lysine 291, and lysine 315 each coordinate NAD(+). Zn(2+) is bound by residues cysteine 409, cysteine 412, cysteine 427, and cysteine 433. Positions 593–669 (EIPQPLAGKV…QTEQDLLALL (77 aa)) constitute a BRCT domain.

The protein belongs to the NAD-dependent DNA ligase family. LigA subfamily. The cofactor is Mg(2+). Mn(2+) is required as a cofactor.

The catalysed reaction is NAD(+) + (deoxyribonucleotide)n-3'-hydroxyl + 5'-phospho-(deoxyribonucleotide)m = (deoxyribonucleotide)n+m + AMP + beta-nicotinamide D-nucleotide.. Its function is as follows. DNA ligase that catalyzes the formation of phosphodiester linkages between 5'-phosphoryl and 3'-hydroxyl groups in double-stranded DNA using NAD as a coenzyme and as the energy source for the reaction. It is essential for DNA replication and repair of damaged DNA. The chain is DNA ligase from Vibrio vulnificus (strain CMCP6).